The sequence spans 926 residues: Chitin synthase-like protein 2 (926 aa).

Positions 1–56 (MSFQNPSYINAKHRSFLQPKDTQDSQDLRNWVSHSSVDEETAYSSSTLSSSSSKSF) are disordered. Positions 44–55 (SSSTLSSSSSKS) are enriched in low complexity. A run of 7 helical transmembrane segments spans residues 564 to 584 (INSSFSLAVYVIVDFFSLWTT), 599 to 619 (LVFAIEKLVNFFSMANFFLAF), 641 to 661 (LFLVFEYILICLIFSQFMLAM), 671 to 691 (LLFISTALFSIIMIYFVFCVF), 721 to 741 (LLILACYAFVSLICMDPFFIF), 853 to 873 (VLVWAVSNLILAIVLIQVFDG), and 885 to 905 (IFWSIVAFTAWKTMGAVTFIA).

It belongs to the chitin synthase family.

It localises to the membrane. Plays a role in septum formation. Has no chitin synthase activity. This is Chitin synthase-like protein 2 (chs2) from Schizosaccharomyces pombe (strain 972 / ATCC 24843) (Fission yeast).